The sequence spans 498 residues: uncharacterized protein (498 aa).

11 helical membrane passes run 54 to 74, 100 to 120, 128 to 148, 150 to 170, 188 to 208, 221 to 241, 302 to 322, 326 to 346, 353 to 373, 381 to 401, and 446 to 466; these read LLKM…MAFL, VAVS…VVLV, MLAF…FMSS, GGLI…FPAL, SYLF…AYAL, WIYI…LFAL, VLYG…FVGL, YMTI…AWLS, AVYL…MLAS, TATY…LGWL, and AFTL…FFSL.

Belongs to the major facilitator superfamily. Allantoate permease family.

Its subcellular location is the membrane. This is an uncharacterized protein from Schizosaccharomyces pombe (strain 972 / ATCC 24843) (Fission yeast).